We begin with the raw amino-acid sequence, 236 residues long: Biosynthetic peptidoglycan transglycosylase (236 aa).

The chain crosses the membrane as a helical span at residues 12-31 (ALLWFAASSIVLVLVFRWVP).

It belongs to the glycosyltransferase 51 family.

The protein localises to the cell inner membrane. The enzyme catalyses [GlcNAc-(1-&gt;4)-Mur2Ac(oyl-L-Ala-gamma-D-Glu-L-Lys-D-Ala-D-Ala)](n)-di-trans,octa-cis-undecaprenyl diphosphate + beta-D-GlcNAc-(1-&gt;4)-Mur2Ac(oyl-L-Ala-gamma-D-Glu-L-Lys-D-Ala-D-Ala)-di-trans,octa-cis-undecaprenyl diphosphate = [GlcNAc-(1-&gt;4)-Mur2Ac(oyl-L-Ala-gamma-D-Glu-L-Lys-D-Ala-D-Ala)](n+1)-di-trans,octa-cis-undecaprenyl diphosphate + di-trans,octa-cis-undecaprenyl diphosphate + H(+). The protein operates within cell wall biogenesis; peptidoglycan biosynthesis. Functionally, peptidoglycan polymerase that catalyzes glycan chain elongation from lipid-linked precursors. This is Biosynthetic peptidoglycan transglycosylase from Pseudomonas putida (strain GB-1).